Consider the following 87-residue polypeptide: U9-ctenitoxin-Pn1a (87 aa).

An N-terminal signal peptide occupies residues 1–22 (MWLKTQLFVLAIAVIALLEVHA). Residues 23–37 (EPESNDNNELVVEEA) constitute a propeptide that is removed on maturation. 4 disulfide bridges follow: C40–C54, C47–C64, C53–C73, and C66–C71. Positions 75–87 (KSLREMAAAAFGR) are excised as a propeptide.

Belongs to the neurotoxin 02 (plectoxin) family. 01 (Tx3) subfamily. Expressed by the venom gland.

The protein resides in the secreted. Antagonist of L-type calcium channels (Cav1/CACNA1). The sequence is that of U9-ctenitoxin-Pn1a from Phoneutria nigriventer (Brazilian armed spider).